A 160-amino-acid chain; its full sequence is Cytochrome c-type biogenesis protein CcmE (160 aa).

Residues Met-1–Arg-8 lie on the Cytoplasmic side of the membrane. Residues Leu-9–Ala-29 traverse the membrane as a helical; Signal-anchor for type II membrane protein segment. At Leu-30–Leu-160 the chain is on the periplasmic side. The heme site is built by His-130 and Tyr-134.

Belongs to the CcmE/CycJ family.

It is found in the cell inner membrane. In terms of biological role, heme chaperone required for the biogenesis of c-type cytochromes. Transiently binds heme delivered by CcmC and transfers the heme to apo-cytochromes in a process facilitated by CcmF and CcmH. This is Cytochrome c-type biogenesis protein CcmE from Pectobacterium atrosepticum (strain SCRI 1043 / ATCC BAA-672) (Erwinia carotovora subsp. atroseptica).